The primary structure comprises 470 residues: ADAM DEC1 (470 aa).

The first 30 residues, 1–30, serve as a signal peptide directing secretion; sequence MLRGISQLPAVATMSWVLLPVLWLIVQTQA. Residues 31–205 constitute a propeptide that is removed on maturation; it reads IAIKQTPELT…QGPIRISRSL (175 aa). N61 carries an N-linked (GlcNAc...) asparagine glycan. Positions 173–200 are disordered; the sequence is FTSNQEEQDPANHTCGVKSTDGKQGPIR. The N-linked (GlcNAc...) (complex) asparagine glycan is linked to N184. The Peptidase M12B domain occupies 218 to 412; the sequence is KYIDLYLVLD…QKPKCLLQAP (195 aa). N-linked (GlcNAc...) asparagine glycosylation is present at N237. 2 cysteine pairs are disulfide-bonded: C328/C407 and C369/C374. Residue H352 coordinates Zn(2+). E353 is a catalytic residue. Zn(2+) contacts are provided by H356 and D362. In terms of domain architecture, Disintegrin spans 420 to 470; it reads TPVCGNHLLEVGEDCDCGSPKECTNLCCEALTCKLKPGTDCGGDAPNHTTE. N466 is a glycosylation site (N-linked (GlcNAc...) asparagine).

Requires Zn(2+) as cofactor. As to expression, expressed highly in the small intestine and appendix, moderately in lymph node, mucosal lining of the colon, thymus, spleen and very weakly in the bone marrow. Predominantly expressed in dendritic cells (DC) of the germinal center. Weakly expressed in monocyte and highly expressed in macrophage. Absent in immature DC.

It is found in the secreted. In terms of biological role, may play an important role in the control of the immune response and during pregnancy. The protein is ADAM DEC1 (ADAMDEC1) of Homo sapiens (Human).